A 207-amino-acid chain; its full sequence is 3-demethoxyubiquinol 3-hydroxylase (207 aa).

Residues 22–32 (ERANPADRLAP) are compositionally biased toward basic and acidic residues. The tract at residues 22–41 (ERANPADRLAPETEQMNPEE) is disordered. Glu56, Glu86, His89, Glu138, Glu170, and His173 together coordinate Fe cation.

It belongs to the COQ7 family. The cofactor is Fe cation.

The protein localises to the cell membrane. The enzyme catalyses a 5-methoxy-2-methyl-3-(all-trans-polyprenyl)benzene-1,4-diol + AH2 + O2 = a 3-demethylubiquinol + A + H2O. It functions in the pathway cofactor biosynthesis; ubiquinone biosynthesis. Catalyzes the hydroxylation of 2-nonaprenyl-3-methyl-6-methoxy-1,4-benzoquinol during ubiquinone biosynthesis. This chain is 3-demethoxyubiquinol 3-hydroxylase, found in Cupriavidus metallidurans (strain ATCC 43123 / DSM 2839 / NBRC 102507 / CH34) (Ralstonia metallidurans).